A 428-amino-acid chain; its full sequence is Dihydroorotase (428 aa).

His-60 and His-62 together coordinate Zn(2+). Substrate contacts are provided by residues His-62–Arg-64 and Asn-94. Zn(2+) is bound by residues Asp-152, His-179, and His-232. Residue Asn-278 coordinates substrate. A Zn(2+)-binding site is contributed by Asp-305. The active site involves Asp-305. His-309 contacts substrate.

This sequence belongs to the metallo-dependent hydrolases superfamily. DHOase family. Class I DHOase subfamily. Requires Zn(2+) as cofactor.

It catalyses the reaction (S)-dihydroorotate + H2O = N-carbamoyl-L-aspartate + H(+). It functions in the pathway pyrimidine metabolism; UMP biosynthesis via de novo pathway; (S)-dihydroorotate from bicarbonate: step 3/3. In terms of biological role, catalyzes the reversible cyclization of carbamoyl aspartate to dihydroorotate. The polypeptide is Dihydroorotase (Ruminiclostridium cellulolyticum (strain ATCC 35319 / DSM 5812 / JCM 6584 / H10) (Clostridium cellulolyticum)).